A 161-amino-acid polypeptide reads, in one-letter code: Regulator of ribonuclease activity A (161 aa).

Belongs to the RraA family. As to quaternary structure, homotrimer. Binds to both RNA-binding sites in the C-terminal region of Rne and to RhlB.

The protein localises to the cytoplasm. Its function is as follows. Globally modulates RNA abundance by binding to RNase E (Rne) and regulating its endonucleolytic activity. Can modulate Rne action in a substrate-dependent manner by altering the composition of the degradosome. Modulates RNA-binding and helicase activities of the degradosome. The chain is Regulator of ribonuclease activity A from Salmonella agona (strain SL483).